The chain runs to 111 residues: Transcription initiation factor IIA subunit 2 (111 aa).

The protein belongs to the TFIIA subunit 2 family. In terms of assembly, TFIIA is a heterodimer of the large unprocessed subunit 1 and a small subunit gamma. It was originally believed to be a heterotrimer of an alpha, a beta and a gamma subunit. Interacts with NCOA6 general coactivator. TFIIA forms a complex with TBP.

The protein localises to the nucleus. TFIIA is a component of the transcription machinery of RNA polymerase II and plays an important role in transcriptional activation. TFIIA in a complex with TBP mediates transcriptional activity. In Paralichthys olivaceus (Bastard halibut), this protein is Transcription initiation factor IIA subunit 2 (gtf2a2).